Reading from the N-terminus, the 314-residue chain is Ribosomal RNA small subunit methyltransferase H (314 aa).

S-adenosyl-L-methionine is bound by residues 35-37, D55, F79, D101, and Q108; that span reads GGH.

This sequence belongs to the methyltransferase superfamily. RsmH family.

Its subcellular location is the cytoplasm. It carries out the reaction cytidine(1402) in 16S rRNA + S-adenosyl-L-methionine = N(4)-methylcytidine(1402) in 16S rRNA + S-adenosyl-L-homocysteine + H(+). In terms of biological role, specifically methylates the N4 position of cytidine in position 1402 (C1402) of 16S rRNA. The sequence is that of Ribosomal RNA small subunit methyltransferase H from Pectobacterium carotovorum subsp. carotovorum (strain PC1).